We begin with the raw amino-acid sequence, 463 residues long: MTKEYKTITEISGPLVFVEKTEPVGYGELVEIRTASGEVKRGQVLDTSDEIVVVQVFEGTGGLSKDSSVRFTGDVIKMPLSPSIIGRVLSGSGRPRDGGPPIVPEVEREIIGAAINPASREKPRAFIQTGISTIDGTNTLVRGQKLPIFSGAGLPHNDVALQIARQAKVLGEAEEFAVVFCAMGITNEEAQHFMADFERTGALERAVIFLNLADDPAVERLLTPKLGLTTAEYLAFDLDMHVLVIYTDMTNYCESLRQMGAAREEVPGRRGYPGYMYTDLATNYERAGIIKGKKGSITQFPILTMPGDDITHPIPDLSGYITEGQLIVSRELHRKGIYPPIDIRPSLSRLMNSGIGAGHTREDHRAVSDQLYAYYAEGCDLRGLAAIVGKEALSERDKLILEFADQFERRFVNQGRDEDRSIIETLTIGWELLSMLPETMLTRIDDKFIKKYHPKYAGTAKKE.

This sequence belongs to the ATPase alpha/beta chains family. As to quaternary structure, has multiple subunits with at least A(3), B(3), C, D, E, F, H, I and proteolipid K(x).

The protein resides in the cell membrane. Functionally, component of the A-type ATP synthase that produces ATP from ADP in the presence of a proton gradient across the membrane. The B chain is a regulatory subunit. The protein is A-type ATP synthase subunit B of Methanothrix thermoacetophila (strain DSM 6194 / JCM 14653 / NBRC 101360 / PT) (Methanosaeta thermophila).